The chain runs to 140 residues: Phosphoribosyl-AMP cyclohydrolase (140 aa).

D78 contacts Mg(2+). C79 serves as a coordination point for Zn(2+). Positions 80 and 82 each coordinate Mg(2+). Residues C96 and C103 each contribute to the Zn(2+) site.

Belongs to the PRA-CH family. Homodimer. Requires Mg(2+) as cofactor. It depends on Zn(2+) as a cofactor.

It localises to the cytoplasm. The enzyme catalyses 1-(5-phospho-beta-D-ribosyl)-5'-AMP + H2O = 1-(5-phospho-beta-D-ribosyl)-5-[(5-phospho-beta-D-ribosylamino)methylideneamino]imidazole-4-carboxamide. It functions in the pathway amino-acid biosynthesis; L-histidine biosynthesis; L-histidine from 5-phospho-alpha-D-ribose 1-diphosphate: step 3/9. Its function is as follows. Catalyzes the hydrolysis of the adenine ring of phosphoribosyl-AMP. This is Phosphoribosyl-AMP cyclohydrolase from Ralstonia nicotianae (strain ATCC BAA-1114 / GMI1000) (Ralstonia solanacearum).